We begin with the raw amino-acid sequence, 324 residues long: Phospho-N-acetylmuramoyl-pentapeptide-transferase (324 aa).

A run of 9 helical transmembrane segments spans residues 13 to 33 (VLSA…IFIP), 59 to 79 (PTMG…IIGY), 85 to 105 (GMVV…DDIL), 121 to 141 (MILL…NIGT), 143 to 163 (IIIP…PLVV), 179 to 199 (IDGL…IVGF), 201 to 221 (TGHY…LGFL), 243 to 263 (AIAT…VGGI), and 303 to 323 (VKLV…GFIA).

This sequence belongs to the glycosyltransferase 4 family. MraY subfamily. Requires Mg(2+) as cofactor.

The protein resides in the cell membrane. The enzyme catalyses UDP-N-acetyl-alpha-D-muramoyl-L-alanyl-gamma-D-glutamyl-meso-2,6-diaminopimeloyl-D-alanyl-D-alanine + di-trans,octa-cis-undecaprenyl phosphate = di-trans,octa-cis-undecaprenyl diphospho-N-acetyl-alpha-D-muramoyl-L-alanyl-D-glutamyl-meso-2,6-diaminopimeloyl-D-alanyl-D-alanine + UMP. Its pathway is cell wall biogenesis; peptidoglycan biosynthesis. In terms of biological role, catalyzes the initial step of the lipid cycle reactions in the biosynthesis of the cell wall peptidoglycan: transfers peptidoglycan precursor phospho-MurNAc-pentapeptide from UDP-MurNAc-pentapeptide onto the lipid carrier undecaprenyl phosphate, yielding undecaprenyl-pyrophosphoryl-MurNAc-pentapeptide, known as lipid I. The chain is Phospho-N-acetylmuramoyl-pentapeptide-transferase from Clostridium botulinum (strain Alaska E43 / Type E3).